We begin with the raw amino-acid sequence, 506 residues long: Proline--tRNA ligase (506 aa).

This sequence belongs to the class-II aminoacyl-tRNA synthetase family. ProS type 3 subfamily. In terms of assembly, homodimer.

The protein resides in the cytoplasm. It catalyses the reaction tRNA(Pro) + L-proline + ATP = L-prolyl-tRNA(Pro) + AMP + diphosphate. In terms of biological role, catalyzes the attachment of proline to tRNA(Pro) in a two-step reaction: proline is first activated by ATP to form Pro-AMP and then transferred to the acceptor end of tRNA(Pro). The protein is Proline--tRNA ligase of Rhodopirellula baltica (strain DSM 10527 / NCIMB 13988 / SH1).